The primary structure comprises 260 residues: 14-3-3-like protein (260 aa).

A disordered region spans residues 240–260 (DMQDDGGDEIKEAAPKPDEQY). Residues 247 to 260 (DEIKEAAPKPDEQY) show a composition bias toward basic and acidic residues.

This sequence belongs to the 14-3-3 family.

This chain is 14-3-3-like protein, found in Oenothera elata subsp. hookeri (Hooker's evening primrose).